A 711-amino-acid polypeptide reads, in one-letter code: Protein ACTIVITY OF BC1 COMPLEX KINASE 3, chloroplastic (711 aa).

Residues 1 to 42 (MSLVVGQSLGLTLVGDGLSLRNSKINVGKSKFFSVNRRRLAR) constitute a chloroplast transit peptide. The region spanning 216–546 (SVSPEPIAAA…IELLFKDGKF (331 aa)) is the Protein kinase domain. ATP-binding positions include 222–230 (IAAASLGQV) and lysine 245. Catalysis depends on aspartate 379, which acts as the Proton acceptor.

This sequence belongs to the protein kinase superfamily. ADCK protein kinase family. As to quaternary structure, interacts with ABC1K1 in plastoglobules (PG). Interacts with PGM48.

The protein resides in the plastid. The protein localises to the chloroplast. It is found in the plastoglobule. The enzyme catalyses L-seryl-[protein] + ATP = O-phospho-L-seryl-[protein] + ADP + H(+). It catalyses the reaction L-threonyl-[protein] + ATP = O-phospho-L-threonyl-[protein] + ADP + H(+). In terms of biological role, kinase that can phosphorylate the tocopherol cyclase VTE1, a key enzyme of tocopherol (vitamin E) metabolism and involved in the recycling of oxidated alpha-tocopherol quinone, possibly stabilizing it at plastoglobules. Also regulates membrane prenylquinone composition. Required for photooxidative stress responses to prevent photosystem II core and chlorophyll degradations. Together with ABC1K1, contributes to plastoglobule (PG) function in prenyl-lipid metabolism, stress response, and thylakoid remodeling. Promotes photodamage of chloroplasts under continuous red light, thus working in opposition to ABC1K1. This is Protein ACTIVITY OF BC1 COMPLEX KINASE 3, chloroplastic from Arabidopsis thaliana (Mouse-ear cress).